Here is a 611-residue protein sequence, read N- to C-terminus: Glutamine--fructose-6-phosphate aminotransferase [isomerizing] (611 aa).

The active-site Nucleophile; for GATase activity is C2. The Glutamine amidotransferase type-2 domain occupies C2–Q219. 2 SIS domains span residues A287–A427 and W460–P601. The active-site For Fru-6P isomerization activity is K606.

Homodimer.

It localises to the cytoplasm. It catalyses the reaction D-fructose 6-phosphate + L-glutamine = D-glucosamine 6-phosphate + L-glutamate. Functionally, catalyzes the first step in hexosamine metabolism, converting fructose-6P into glucosamine-6P using glutamine as a nitrogen source. The chain is Glutamine--fructose-6-phosphate aminotransferase [isomerizing] from Acidithiobacillus ferridurans.